Consider the following 318-residue polypeptide: L-carnitine dehydrogenase (318 aa).

14–19 (GSGVIG) contacts NAD(+).

This sequence belongs to the 3-hydroxyacyl-CoA dehydrogenase family. L-carnitine dehydrogenase subfamily. As to quaternary structure, homodimer.

The protein localises to the cytoplasm. It catalyses the reaction carnitine + NAD(+) = 3-dehydrocarnitine + NADH + H(+). It functions in the pathway amine and polyamine metabolism; carnitine metabolism. Its function is as follows. Catalyzes the NAD(+)-dependent oxidation of L-carnitine to 3-dehydrocarnitine. The sequence is that of L-carnitine dehydrogenase from Pseudomonas syringae pv. syringae (strain B728a).